The primary structure comprises 393 residues: UDP-sulfoquinovose synthase (393 aa).

Residues 31-35, 74-75, Arg-100, and Asn-118 each bind NAD(+); these read DNLST and DI. Arg-100 contacts substrate. Substrate-binding residues include Thr-144 and Tyr-182. Thr-144 is a catalytic residue. NAD(+) is bound by residues Tyr-182 and Lys-186. Tyr-182 functions as the Proton acceptor in the catalytic mechanism. Residue Lys-186 is part of the active site. A substrate-binding site is contributed by Gln-209. NAD(+) is bound at residue Val-212. Substrate contacts are provided by residues 238-241, 253-255, and 326-328; these read VVNR, TVY, and RVE.

This sequence belongs to the NAD(P)-dependent epimerase/dehydratase family. NAD(+) is required as a cofactor.

The catalysed reaction is sulfite + UDP-alpha-D-glucose + H(+) = UDP-alpha-D-6-sulfoquinovose + H2O. Catalyzes the biosynthesis of UDP-sulfoquinovose by the transfer of sulfite to UDP-glucose. Important for the assembly of the S-layer N-glycans. The reaction probably occurs through an NAD(+)-dependent oxidation/dehydration/enolization/sulfite addition process. In vitro, in the absence of sulfite, UDP-D-glucose is converted via UDP-4-keto-D-glucose to UDP-D-glucose-5,6-ene. The polypeptide is UDP-sulfoquinovose synthase (Sulfolobus acidocaldarius (strain ATCC 33909 / DSM 639 / JCM 8929 / NBRC 15157 / NCIMB 11770)).